The chain runs to 435 residues: 5-hydroxybenzimidazole synthase (435 aa).

Substrate contacts are provided by residues methionine 95, tyrosine 124, histidine 163, 186 to 188, 227 to 230, and glutamate 266; these read SKG and NGLR. Histidine 270 contributes to the Zn(2+) binding site. Tyrosine 293 contacts substrate. Residue histidine 334 coordinates Zn(2+). Positions 410, 413, and 417 each coordinate [4Fe-4S] cluster.

Belongs to the ThiC family. 5-hydroxybenzimidazole synthase subfamily. Homodimer. [4Fe-4S] cluster serves as cofactor.

It catalyses the reaction 5-amino-1-(5-phospho-beta-D-ribosyl)imidazole + AH2 + S-adenosyl-L-methionine = 5-hydroxybenzimidazole + 5'-deoxyadenosine + formate + L-methionine + A + NH4(+) + phosphate + 2 H(+). Functionally, catalyzes the conversion of aminoimidazole ribotide (AIR) to 5-hydroxybenzimidazole (5-HBI) in a radical S-adenosyl-L-methionine (SAM)-dependent reaction. Is thus involved in the anaerobic biosynthesis of the benzimidazole lower axial ligand of the cobamide produced by G.metallireducens. The polypeptide is 5-hydroxybenzimidazole synthase (Geobacter metallireducens (strain ATCC 53774 / DSM 7210 / GS-15)).